Here is a 1119-residue protein sequence, read N- to C-terminus: MQFRTVLDVKVVDVEKRRNPSKHYVYLINVTYSDSTSHIIYRRYSKFFDLQMQILDKFPIEGGQKDPKKRIIPFLPGKILFRRSHVRDVAMKRLRFIDDYCRALVRLPPQISQSEEVLRFFETKPDDINPPVEDYGSKRKSGLDSSEPMVLEQYVVVANYERQENSEISLKAGETVDVIEKSESGWWFVSTAEEQGWVPATYLDSQSGTRDDLDLGTSRSGEVTKRRKAHLKRLDRRWTLGGIVNRQQSREEKYVSVQAYASQGKDEIGFEKGVTVEVIQKNLEGWWYIRYQGKEGWAPASYLKKLKDDLSPRKKTLTGPVEIIGNIMEISNLLNKKAVSEKDIQTDGEATTPERHISKSEISLPMPYAPEAGVAPTVVTALGMNSGSSATLQENKSRAEPGSPAIARVAPHRVEIGSPNLRQKPPPRRDANLAFQLPKPPEAPTVEAEYYTIAEFQSSISDGISFRGGQKADVIEKNSGGWWYVQIGDTEGWAPSSYIDKRKKPNLSRRTSTLTRPKVPPPAPPVKKQDSEEGPSLGGSASKAPESPQRVYEEPEYDVPALGFDSELDCNPPKPKTHNSPKPEPRKFEIKSNPAAAERIAQAGKASPLLKVMTSPLRKRNSLENINKEEVIYENEGFRFSSDDFASGCDSHTPRSLTLGRKPFGSSSGGGKPLRKVSPDLNRSHSLGRAERHSSKLFSDESARNPKREPVMRKDVEIRIGQSPLARPKPVVRPKPLLTKSEPQSPERMDISSIRRHLRPTGSLRQGAIRAMRGEDSETASVVSSEDSTSSRSTSDLSSVYSKGSRGGESDHESVLFRTTDAYERAQESELSFPAGVEVEVLEKQESGWWFVRWGSDEGWVPTFYLEPIKHTHNVGIQESRDSPLVDLGSTNKSNSLEKNEQRVQALNNLNQQNLRSMSNPSPPIPSKPPGGFSKPTAMLNGSSVRMRNGVRQAAVRPQSVFVSPPQPLKETNIHTGSLRRNESLGAGDHLRSTGGVRRNSSFTAVRPQPVTDVRVRAGTTITAPAGSSSPLIAQRNGIPISTVRPKPIEKMQLIHNNLREVYVSIADYRGDEETMGFSEGTSLEVLEKNPNGWWYCQVLDGLQGRKGWVPSNYLERKK.

Residues 4–128 (RTVLDVKVVD…RFFETKPDDI (125 aa)) form the PX domain. SH3 domains are found at residues 149–208 (MVLE…SQSG) and 249–308 (SREE…KLKD). Disordered regions lie at residues 388-429 (SSAT…PPRR), 494-595 (APSS…SNPA), 641-815 (SSDD…HESV), 914-941 (NLRSMSNPSPPIPSKPPGGFSKPTAMLN), and 957-1004 (RPQS…SSFT). Residues 445–504 (TVEAEYYTIAEFQSSISDGISFRGGQKADVIEKNSGGWWYVQIGDTEGWAPSSYIDKRKK) enclose the SH3 3 domain. Composition is skewed to basic and acidic residues over residues 581 to 590 (PKPEPRKFEI) and 688 to 718 (GRAERHSSKLFSDESARNPKREPVMRKDVEI). The span at 779–802 (TASVVSSEDSTSSRSTSDLSSVYS) shows a compositional bias: low complexity. A compositionally biased stretch (basic and acidic residues) spans 806–815 (RGGESDHESV). In terms of domain architecture, SH3 4 spans 812-871 (HESVLFRTTDAYERAQESELSFPAGVEVEVLEKQESGWWFVRWGSDEGWVPTFYLEPIKH). Residues 1058 to 1119 (NLREVYVSIA…VPSNYLERKK (62 aa)) enclose the SH3 5 domain.

Belongs to the SH3PXD2 family. In terms of processing, tyrosine phosphorylated.

It localises to the cytoplasm. The protein localises to the cell projection. The protein resides in the podosome. Functionally, adapter protein involved in invadopodia and podosome formation and extracellular matrix degradation. In Danio rerio (Zebrafish), this protein is SH3 and PX domain-containing protein 2A (sh3pxd2a).